The following is a 403-amino-acid chain: Protein STRICTOSIDINE SYNTHASE-LIKE 13 (403 aa).

The N-terminal stretch at 1–42 is a signal peptide; sequence MEKKGQHGTYESMMTHHPILCIIALSVLFIAIDPFHMSPIGG. Asn-66 and Asn-206 each carry an N-linked (GlcNAc...) asparagine glycan.

Belongs to the strictosidine synthase family.

The protein resides in the vacuole. In terms of biological role, required for the exine formation during pollen development. This is Protein STRICTOSIDINE SYNTHASE-LIKE 13 from Arabidopsis thaliana (Mouse-ear cress).